The primary structure comprises 122 residues: Large ribosomal subunit protein uL14 (122 aa).

Belongs to the universal ribosomal protein uL14 family. In terms of assembly, part of the 50S ribosomal subunit. Forms a cluster with proteins L3 and L19. In the 70S ribosome, L14 and L19 interact and together make contacts with the 16S rRNA in bridges B5 and B8.

Functionally, binds to 23S rRNA. Forms part of two intersubunit bridges in the 70S ribosome. This chain is Large ribosomal subunit protein uL14, found in Fervidobacterium nodosum (strain ATCC 35602 / DSM 5306 / Rt17-B1).